Consider the following 286-residue polypeptide: Bifunctional protein FolD (286 aa).

NADP(+) contacts are provided by residues 165 to 167 and S190; that span reads GRS.

It belongs to the tetrahydrofolate dehydrogenase/cyclohydrolase family. In terms of assembly, homodimer.

The enzyme catalyses (6R)-5,10-methylene-5,6,7,8-tetrahydrofolate + NADP(+) = (6R)-5,10-methenyltetrahydrofolate + NADPH. It carries out the reaction (6R)-5,10-methenyltetrahydrofolate + H2O = (6R)-10-formyltetrahydrofolate + H(+). It participates in one-carbon metabolism; tetrahydrofolate interconversion. Its function is as follows. Catalyzes the oxidation of 5,10-methylenetetrahydrofolate to 5,10-methenyltetrahydrofolate and then the hydrolysis of 5,10-methenyltetrahydrofolate to 10-formyltetrahydrofolate. This is Bifunctional protein FolD from Staphylococcus aureus (strain bovine RF122 / ET3-1).